We begin with the raw amino-acid sequence, 338 residues long: Nicotinate-nucleotide--dimethylbenzimidazole phosphoribosyltransferase (338 aa).

Residue E306 is the Proton acceptor of the active site.

The protein belongs to the CobT family.

It catalyses the reaction 5,6-dimethylbenzimidazole + nicotinate beta-D-ribonucleotide = alpha-ribazole 5'-phosphate + nicotinate + H(+). Its pathway is nucleoside biosynthesis; alpha-ribazole biosynthesis; alpha-ribazole from 5,6-dimethylbenzimidazole: step 1/2. Functionally, catalyzes the synthesis of alpha-ribazole-5'-phosphate from nicotinate mononucleotide (NAMN) and 5,6-dimethylbenzimidazole (DMB). This Cereibacter sphaeroides (strain ATCC 17025 / ATH 2.4.3) (Rhodobacter sphaeroides) protein is Nicotinate-nucleotide--dimethylbenzimidazole phosphoribosyltransferase.